Consider the following 118-residue polypeptide: uncharacterized protein (118 aa).

The signal sequence occupies residues 1-18 (MSKLIFLFVVATLATIKA). An N-linked (GlcNAc...) asparagine; by host glycan is attached at Asn24.

This is an uncharacterized protein from Magallana gigas (Pacific oyster).